An 820-amino-acid polypeptide reads, in one-letter code: Leucine--tRNA ligase (820 aa).

Residues 42-52 (PYPSGDLHMGH) carry the 'HIGH' region motif. Residues 576 to 580 (KMSKS) carry the 'KMSKS' region motif. Residue Lys579 participates in ATP binding.

The protein belongs to the class-I aminoacyl-tRNA synthetase family.

The protein localises to the cytoplasm. The catalysed reaction is tRNA(Leu) + L-leucine + ATP = L-leucyl-tRNA(Leu) + AMP + diphosphate. The chain is Leucine--tRNA ligase from Coxiella burnetii (strain CbuG_Q212) (Coxiella burnetii (strain Q212)).